The following is a 304-amino-acid chain: GTPase Era (304 aa).

An Era-type G domain is found at 11 to 179; sequence YCGFIAIVGR…QKIVRKSLRE (169 aa). A G1 region spans residues 19 to 26; sequence GRPNVGKS. A GTP-binding site is contributed by 19–26; sequence GRPNVGKS. Residues 45-49 are G2; sequence QTTRH. The tract at residues 66–69 is G3; the sequence is DTPG. GTP-binding positions include 66-70 and 128-131; these read DTPGL and NKVD. The G4 stretch occupies residues 128–131; it reads NKVD. Positions 158–160 are G5; it reads ISA. A KH type-2 domain is found at 210-287; sequence TGEELPYSVT…HLELWVKVKA (78 aa).

The protein belongs to the TRAFAC class TrmE-Era-EngA-EngB-Septin-like GTPase superfamily. Era GTPase family. In terms of assembly, monomer.

Its subcellular location is the cytoplasm. It localises to the cell inner membrane. Functionally, an essential GTPase that binds both GDP and GTP, with rapid nucleotide exchange. Plays a role in 16S rRNA processing and 30S ribosomal subunit biogenesis and possibly also in cell cycle regulation and energy metabolism. The protein is GTPase Era of Haemophilus ducreyi (strain 35000HP / ATCC 700724).